The following is a 1011-amino-acid chain: Protein translocase subunit SecA (1011 aa).

ATP contacts are provided by residues Q87, 105-109, and D500; that span reads GEGKT. The disordered stretch occupies residues 969-1011; it reads SLPLGANPAPARPQPAVMQEQECPCGSGKPFNKCHGGEDEATA. Residues C991, C993, C1002, and H1003 each contribute to the Zn(2+) site.

Belongs to the SecA family. Monomer and homodimer. Part of the essential Sec protein translocation apparatus which comprises SecA, SecYEG and auxiliary proteins SecDF-YajC and YidC. Zn(2+) is required as a cofactor.

Its subcellular location is the cell inner membrane. The protein localises to the cytoplasm. It carries out the reaction ATP + H2O + cellular proteinSide 1 = ADP + phosphate + cellular proteinSide 2.. In terms of biological role, part of the Sec protein translocase complex. Interacts with the SecYEG preprotein conducting channel. Has a central role in coupling the hydrolysis of ATP to the transfer of proteins into and across the cell membrane, serving as an ATP-driven molecular motor driving the stepwise translocation of polypeptide chains across the membrane. The sequence is that of Protein translocase subunit SecA from Sorangium cellulosum (strain So ce56) (Polyangium cellulosum (strain So ce56)).